The following is a 123-amino-acid chain: uncharacterized protein (123 aa).

This is an uncharacterized protein from Saccharomyces cerevisiae (strain ATCC 204508 / S288c) (Baker's yeast).